The primary structure comprises 190 residues: GTP cyclohydrolase 1 (190 aa).

Positions 75, 78, and 146 each coordinate Zn(2+).

This sequence belongs to the GTP cyclohydrolase I family. Homomer.

The enzyme catalyses GTP + H2O = 7,8-dihydroneopterin 3'-triphosphate + formate + H(+). The protein operates within cofactor biosynthesis; 7,8-dihydroneopterin triphosphate biosynthesis; 7,8-dihydroneopterin triphosphate from GTP: step 1/1. This is GTP cyclohydrolase 1 from Campylobacter concisus (strain 13826).